We begin with the raw amino-acid sequence, 309 residues long: Calcium homeostasis modulator protein 5 (309 aa).

Residues Met-1–Lys-15 lie on the Cytoplasmic side of the membrane. A helical membrane pass occupies residues Thr-16–Val-37. Arg-32 and Val-37 together coordinate a 1,2-diacyl-sn-glycero-3-phosphate. Residues Ala-38–Val-45 are Extracellular-facing. Cystine bridges form between Cys-41–Cys-127, Cys-43–Cys-158, and Cys-142–Cys-149. The helical transmembrane segment at Glu-46 to Asn-70 threads the bilayer. Topologically, residues Asn-71 to Val-99 are cytoplasmic. A helical membrane pass occupies residues Leu-100–Met-129. Asn-121 provides a ligand contact to a 1,2-diacyl-sn-glycero-3-phosphate. The Extracellular segment spans residues Ser-130–Ser-174. The helical transmembrane segment at Leu-175 to Tyr-200 threads the bilayer. The Cytoplasmic portion of the chain corresponds to Ala-201–Leu-309. Residue Arg-202 participates in a 1,2-diacyl-sn-glycero-3-phosphate binding.

The protein belongs to the CALHM family. Oligomerizes to form undecameric cone-shaped channels.

It localises to the membrane. Functionally, may assemble to form large pore channels with gating and ion conductance likely regulated by membrane lipids. In Mus musculus (Mouse), this protein is Calcium homeostasis modulator protein 5.